The primary structure comprises 585 residues: Protein NRT1/ PTR FAMILY 4.6 (585 aa).

12 helical membrane passes run 28–48 (GMLA…AYLA), 75–95 (FMGT…AFFS), 96–116 (TFQI…ILTI), 142–162 (AMLF…KGSL), 184–204 (FFNY…TFVV), 211–231 (GWEW…LIFL), 343–363 (IVLK…CLAQ), 391–411 (IFPV…IIPF), 428–448 (IGVG…VEIK), 465–485 (LPVT…ADLF), 508–528 (SLSW…VSIV), and 554–574 (FYWL…FWAM).

It belongs to the major facilitator superfamily. Proton-dependent oligopeptide transporter (POT/PTR) (TC 2.A.17) family. In terms of tissue distribution, expressed in root hairs and in epidermis of both root tips and mature regions of roots. Detected in shoots, stems, flowers, siliques and imbibed seeds. Expressed in vascular tissues in cotyledons, trus leaves, hypocotyls, roots and inflorescence stems.

The protein resides in the cell membrane. Low-affinity proton-dependent nitrate transporter. Involved in constitutive nitrate uptake. Not involved in histidine or dipeptides transport. Involved in (+)-abscisic acid (ABA) transport, but not in gibberellin, indole-3-acetic acid or jasmonic acid import. Mediates cellular ABA uptake. Nitrate does not compete with abscisic acid as a substrate of NPF4.6. The chain is Protein NRT1/ PTR FAMILY 4.6 (NPF4.6) from Arabidopsis thaliana (Mouse-ear cress).